The primary structure comprises 317 residues: Beta-ketoacyl-[acyl-carrier-protein] synthase III (317 aa).

Residues C112 and H244 contribute to the active site. An ACP-binding region spans residues 245 to 249 (QANLR). N274 is a catalytic residue.

It belongs to the thiolase-like superfamily. FabH family. Homodimer.

It is found in the cytoplasm. The enzyme catalyses malonyl-[ACP] + acetyl-CoA + H(+) = 3-oxobutanoyl-[ACP] + CO2 + CoA. It functions in the pathway lipid metabolism; fatty acid biosynthesis. Catalyzes the condensation reaction of fatty acid synthesis by the addition to an acyl acceptor of two carbons from malonyl-ACP. Catalyzes the first condensation reaction which initiates fatty acid synthesis and may therefore play a role in governing the total rate of fatty acid production. Possesses both acetoacetyl-ACP synthase and acetyl transacylase activities. Its substrate specificity determines the biosynthesis of branched-chain and/or straight-chain of fatty acids. In Shigella boydii serotype 4 (strain Sb227), this protein is Beta-ketoacyl-[acyl-carrier-protein] synthase III.